The following is an 80-amino-acid chain: UPF0512 protein J (80 aa).

It belongs to the UPF0512 family.

This is UPF0512 protein J from Dictyostelium discoideum (Social amoeba).